The sequence spans 542 residues: MNTLENTFQFLAEVFEANGGCLVTERVSPSLSGASKRKSRPVKRIITEDEVIPEEEVVEEEEEEKVEQPSEEVTCPAMQVDATDAILASLRQIANNDLSEHCIREDEGNTSAEVFSNGNGEDMEQAGLAGTDLLRRVADMLQGNHNGSLNSHFLQQQFAAFKETVDPTPVSTNGNGLLTPITTQLSPLFTSTDAFNSPEKLLQAIMTPSLGFLGANGLGASNSGLLSSPLIAPSPTLLQSLMNTPTQPTASLTPKKAENRPPVVSQTLKASKRRLFDDTSRIEAASMSGDDRIDMNELEAFAQTFKKQRIKFGFTQGDVGVALGKRYGTDFSQTTISRFEALNLSFKNMCKLRPLLKEWLADVEMAIEGGATVTDLIDKKTIHNGNHHTIHHVDIHETSISNSISSVTASSLLSREQHVKRRRKRTNLDMNQRNALDTFFALNPRPDHDKMTDIANSLELDRDVVRVWFCNRRQKMRRVDEPIEGEMVTPSVSPVFPHFSSMSALEQIQEAARLASCQASNDDSDGTSGSPDAPSNDGCSDL.

Residues 243–252 show a composition bias toward polar residues; it reads NTPTQPTASL. The tract at residues 243 to 264 is disordered; sequence NTPTQPTASLTPKKAENRPPVV. Residues 290 to 364 form the POU-specific domain; that stretch reads DDRIDMNELE…LLKEWLADVE (75 aa). Residues 421–480 constitute a DNA-binding region (homeobox); sequence RRRKRTNLDMNQRNALDTFFALNPRPDHDKMTDIANSLELDRDVVRVWFCNRRQKMRRVD. Residues 514–542 form a disordered region; sequence LASCQASNDDSDGTSGSPDAPSNDGCSDL. Residues 517-530 show a composition bias toward polar residues; it reads CQASNDDSDGTSGS.

The protein belongs to the POU transcription factor family. In terms of assembly, interacts with akir-1. As to expression, expressed in the gonadal sheath cells that signal the oocyte, but not in the oocyte.

The protein resides in the nucleus. Its function is as follows. Directs gonadal sheath cell differentiation and function. Also directs gonad migration and plays a role in specifying the differentiated phenotypes of epidermal cells during postembryonic development. Plays a role in oogenesis, regulating a sheath cell signal that causes oocytes to maintain diakinesis arrest during meiosis. Negatively regulates oocyte maturation, ovulation and MAPK activation in oocytes when sperm are not available for fertilization. May be recruited by akir-1 to the promoter regions of antimicrobial peptide genes to control gene expression in response to fungal infection. This is Homeobox protein ceh-18 from Caenorhabditis elegans.